The primary structure comprises 101 residues: Thyrotropin subunit beta (101 aa).

4 cysteine pairs are disulfide-bonded: Cys2-Cys88, Cys10-Cys66, Cys14-Cys68, and Cys71-Cys78. N-linked (GlcNAc...) asparagine glycosylation occurs at Asn6.

This sequence belongs to the glycoprotein hormones subunit beta family. As to quaternary structure, heterodimer of a common alpha chain and a unique beta chain which confers biological specificity to thyrotropin, lutropin, follitropin and gonadotropin.

It localises to the secreted. In terms of biological role, indispensable for the control of thyroid structure and metabolism. The chain is Thyrotropin subunit beta (TSHB) from Phodopus sungorus (Striped hairy-footed hamster).